The following is a 609-amino-acid chain: Adenine deaminase (609 aa).

It belongs to the metallo-dependent hydrolases superfamily. Adenine deaminase family. Mn(2+) is required as a cofactor.

It carries out the reaction adenine + H2O + H(+) = hypoxanthine + NH4(+). This chain is Adenine deaminase, found in Cenarchaeum symbiosum (strain A).